We begin with the raw amino-acid sequence, 153 residues long: 3-hydroxyacyl-[acyl-carrier-protein] dehydratase FabZ (153 aa).

The active site involves histidine 56.

It belongs to the thioester dehydratase family. FabZ subfamily.

It localises to the cytoplasm. It carries out the reaction a (3R)-hydroxyacyl-[ACP] = a (2E)-enoyl-[ACP] + H2O. Its function is as follows. Involved in unsaturated fatty acids biosynthesis. Catalyzes the dehydration of short chain beta-hydroxyacyl-ACPs and long chain saturated and unsaturated beta-hydroxyacyl-ACPs. The sequence is that of 3-hydroxyacyl-[acyl-carrier-protein] dehydratase FabZ from Nitrosomonas europaea (strain ATCC 19718 / CIP 103999 / KCTC 2705 / NBRC 14298).